Here is a 157-residue protein sequence, read N- to C-terminus: Small ribosomal subunit protein bS16 (157 aa).

The segment covering 125 to 141 (KRKAAKKAAEEAAAKEA) has biased composition (basic and acidic residues). Residues 125–157 (KRKAAKKAAEEAAAKEAEAEEAAEDKAEEESAE) are disordered. The span at 142-157 (EAEEAAEDKAEEESAE) shows a compositional bias: acidic residues.

This sequence belongs to the bacterial ribosomal protein bS16 family.

The protein is Small ribosomal subunit protein bS16 of Corynebacterium kroppenstedtii (strain DSM 44385 / JCM 11950 / CIP 105744 / CCUG 35717).